The primary structure comprises 317 residues: Ribosome production factor 2 homolog (317 aa).

Residues 28 to 240 (KTAIFLRGNA…IRRVQPAESD (213 aa)) form the Brix domain. The interval 287–317 (MKGLKRSVEEREDSENEEVEIEEDVISDASE) is disordered. A phosphoserine mark is found at Ser293, Ser300, Ser313, and Ser316. The span at 296-317 (EREDSENEEVEIEEDVISDASE) shows a compositional bias: acidic residues.

This sequence belongs to the RPF2 family. Component of a hexameric 5S RNP precursor complex, composed of 5S RNA, rrs1, rpf2, rpl5a/rpl5b, rpl11a/rpl11b and syo1; this complex acts as a precursor for ribosome assembly.

Its subcellular location is the nucleus. It is found in the nucleolus. This is Ribosome production factor 2 homolog from Schizosaccharomyces pombe (strain 972 / ATCC 24843) (Fission yeast).